The primary structure comprises 426 residues: Enolase (426 aa).

Residue Gln162 participates in (2R)-2-phosphoglycerate binding. Glu204 serves as the catalytic Proton donor. Asp241, Glu284, and Asp311 together coordinate Mg(2+). (2R)-2-phosphoglycerate contacts are provided by Lys336, Arg365, Ser366, and Lys387. Residue Lys336 is the Proton acceptor of the active site.

It belongs to the enolase family. Mg(2+) serves as cofactor.

It localises to the cytoplasm. The protein resides in the secreted. The protein localises to the cell surface. It carries out the reaction (2R)-2-phosphoglycerate = phosphoenolpyruvate + H2O. Its pathway is carbohydrate degradation; glycolysis; pyruvate from D-glyceraldehyde 3-phosphate: step 4/5. Functionally, catalyzes the reversible conversion of 2-phosphoglycerate (2-PG) into phosphoenolpyruvate (PEP). It is essential for the degradation of carbohydrates via glycolysis. In Acidithiobacillus ferrooxidans (strain ATCC 23270 / DSM 14882 / CIP 104768 / NCIMB 8455) (Ferrobacillus ferrooxidans (strain ATCC 23270)), this protein is Enolase.